A 177-amino-acid chain; its full sequence is Large ribosomal subunit protein uL6 (177 aa).

This sequence belongs to the universal ribosomal protein uL6 family. In terms of assembly, part of the 50S ribosomal subunit.

This protein binds to the 23S rRNA, and is important in its secondary structure. It is located near the subunit interface in the base of the L7/L12 stalk, and near the tRNA binding site of the peptidyltransferase center. The protein is Large ribosomal subunit protein uL6 of Paracoccus denitrificans (strain Pd 1222).